The sequence spans 133 residues: Small ribosomal subunit protein uS8 (133 aa).

Belongs to the universal ribosomal protein uS8 family. As to quaternary structure, part of the 30S ribosomal subunit. Contacts proteins S5 and S12.

Its function is as follows. One of the primary rRNA binding proteins, it binds directly to 16S rRNA central domain where it helps coordinate assembly of the platform of the 30S subunit. This is Small ribosomal subunit protein uS8 from Synechococcus elongatus (strain ATCC 33912 / PCC 7942 / FACHB-805) (Anacystis nidulans R2).